The sequence spans 189 residues: UPF0316 protein Sca_1484 (189 aa).

Transmembrane regions (helical) follow at residues 8 to 28 (PWLMLLAIFVINVAYVTCLTV), 40 to 60 (VAAAVSFIEVLIYIIGLGLVM), and 66 to 86 (FQNIIAYALGFSVGIIVGMKI).

It belongs to the UPF0316 family.

It localises to the cell membrane. This chain is UPF0316 protein Sca_1484, found in Staphylococcus carnosus (strain TM300).